We begin with the raw amino-acid sequence, 303 residues long: Nitrogenase iron protein (303 aa).

11-18 (GKGGIGKS) provides a ligand contact to ATP. Cys-112 serves as a coordination point for [4Fe-4S] cluster. At Arg-115 the chain carries ADP-ribosylarginine; by dinitrogenase reductase ADP-ribosyltransferase. Cys-147 contributes to the [4Fe-4S] cluster binding site.

This sequence belongs to the NifH/BchL/ChlL family. In terms of assembly, homodimer. [4Fe-4S] cluster is required as a cofactor. In terms of processing, the reversible ADP-ribosylation of Arg-115 inactivates the nitrogenase reductase and regulates nitrogenase activity.

The catalysed reaction is N2 + 8 reduced [2Fe-2S]-[ferredoxin] + 16 ATP + 16 H2O = H2 + 8 oxidized [2Fe-2S]-[ferredoxin] + 2 NH4(+) + 16 ADP + 16 phosphate + 6 H(+). In terms of biological role, the key enzymatic reactions in nitrogen fixation are catalyzed by the nitrogenase complex, which has 2 components: the iron protein and the molybdenum-iron protein. The protein is Nitrogenase iron protein of Wolinella succinogenes (strain ATCC 29543 / DSM 1740 / CCUG 13145 / JCM 31913 / LMG 7466 / NCTC 11488 / FDC 602W) (Vibrio succinogenes).